Here is a 118-residue protein sequence, read N- to C-terminus: Basic phospholipase A2 nigexine (118 aa).

7 disulfides stabilise this stretch: cysteine 11/cysteine 70, cysteine 26/cysteine 117, cysteine 28/cysteine 44, cysteine 43/cysteine 98, cysteine 50/cysteine 91, cysteine 59/cysteine 84, and cysteine 77/cysteine 89. Ca(2+)-binding residues include tyrosine 27, glycine 29, and glycine 31. Residue histidine 47 is part of the active site. Aspartate 48 is a binding site for Ca(2+). The Coagulation factor Xa binding motif signature appears at 52 to 69; that stretch reads EKAGKMGCWPYFTLYKYK. The active site involves aspartate 92.

Belongs to the phospholipase A2 family. Group I subfamily. D49 sub-subfamily. Ca(2+) is required as a cofactor. As to expression, expressed by the venom gland.

Its subcellular location is the secreted. The enzyme catalyses a 1,2-diacyl-sn-glycero-3-phosphocholine + H2O = a 1-acyl-sn-glycero-3-phosphocholine + a fatty acid + H(+). Functionally, snake venom phospholipase A2 (PLA2) that shows anticoagulant activity, has cytotoxic activity and affects neuromuscular transmission in vitro. PLA2 catalyzes the calcium-dependent hydrolysis of the 2-acyl groups in 3-sn-phosphoglycerides. The chain is Basic phospholipase A2 nigexine from Naja pallida (Red spitting cobra).